Here is a 1235-residue protein sequence, read N- to C-terminus: Ubiquitin carboxyl-terminal hydrolase 40 (1235 aa).

The USP domain maps to 41–482; that stretch reads SGIRNQGGTC…SAYMLFYRKS (442 aa). Catalysis depends on Cys50, which acts as the Nucleophile. Residue His305 is the Proton acceptor of the active site. A compositionally biased stretch (basic and acidic residues) spans 1180–1190; it reads IRDDTGKEKQK. The tract at residues 1180–1235 is disordered; it reads IRDDTGKEKQKQRALGRRKSQEALHEQSSYILSSAETPARPRAPETSLSIHVGSFR. The span at 1205 to 1215 shows a compositional bias: polar residues; it reads EQSSYILSSAE.

It belongs to the peptidase C19 family. In terms of tissue distribution, broadly expressed.

The catalysed reaction is Thiol-dependent hydrolysis of ester, thioester, amide, peptide and isopeptide bonds formed by the C-terminal Gly of ubiquitin (a 76-residue protein attached to proteins as an intracellular targeting signal).. In terms of biological role, may be catalytically inactive. This is Ubiquitin carboxyl-terminal hydrolase 40 (USP40) from Homo sapiens (Human).